A 146-amino-acid polypeptide reads, in one-letter code: Large-conductance mechanosensitive channel (146 aa).

The next 3 membrane-spanning stretches (helical) occupy residues 21–41 (VGII…ADLI), 44–64 (VIGL…LGDG), and 83–103 (GAFI…FLLV).

It belongs to the MscL family. In terms of assembly, homopentamer.

The protein resides in the cell inner membrane. Functionally, channel that opens in response to stretch forces in the membrane lipid bilayer. May participate in the regulation of osmotic pressure changes within the cell. This Cereibacter sphaeroides (strain ATCC 17025 / ATH 2.4.3) (Rhodobacter sphaeroides) protein is Large-conductance mechanosensitive channel.